Reading from the N-terminus, the 151-residue chain is UPF0208 membrane protein YfbV (151 aa).

2 helical membrane-spanning segments follow: residues 46-65 and 69-91; these read YAIRFMPPIAVFTLCWQIAL and LGPAVATALFALSLPMQGLWWLG.

Belongs to the UPF0208 family.

The protein localises to the cell inner membrane. This is UPF0208 membrane protein YfbV from Shigella flexneri serotype 5b (strain 8401).